Consider the following 229-residue polypeptide: Adapter protein MecA (229 aa).

It belongs to the MecA family. In terms of assembly, homodimer.

Functionally, enables the recognition and targeting of unfolded and aggregated proteins to the ClpC protease or to other proteins involved in proteolysis. This Latilactobacillus sakei subsp. sakei (strain 23K) (Lactobacillus sakei subsp. sakei) protein is Adapter protein MecA.